Reading from the N-terminus, the 621-residue chain is UvrABC system protein C (621 aa).

The GIY-YIG domain occupies 11–90 (TTPGVYLYKD…IKKHRPRYNI (80 aa)). Residues 200–235 (KELVELLQKDMLYASEALEFEKAATLRDQIQAIKHT) form the UVR domain.

This sequence belongs to the UvrC family. As to quaternary structure, interacts with UvrB in an incision complex.

The protein resides in the cytoplasm. Functionally, the UvrABC repair system catalyzes the recognition and processing of DNA lesions. UvrC both incises the 5' and 3' sides of the lesion. The N-terminal half is responsible for the 3' incision and the C-terminal half is responsible for the 5' incision. The sequence is that of UvrABC system protein C from Lawsonia intracellularis (strain PHE/MN1-00).